A 238-amino-acid polypeptide reads, in one-letter code: Small ribosomal subunit protein uS2 (238 aa).

It belongs to the universal ribosomal protein uS2 family.

The chain is Small ribosomal subunit protein uS2 from Haemophilus ducreyi (strain 35000HP / ATCC 700724).